A 211-amino-acid polypeptide reads, in one-letter code: Proteasome subunit beta 1 (211 aa).

The propeptide at 1–17 (MVIMGNELQLENKILKG) is removed in mature form; by autocatalysis. T18 (nucleophile) is an active-site residue.

The protein belongs to the peptidase T1B family. The 20S proteasome core is composed of 14 alpha and 14 beta subunits that assemble into four stacked heptameric rings, resulting in a barrel-shaped structure. The two inner rings, each composed of seven catalytic beta subunits, are sandwiched by two outer rings, each composed of seven alpha subunits. The catalytic chamber with the active sites is on the inside of the barrel. Has a gated structure, the ends of the cylinder being occluded by the N-termini of the alpha-subunits. Is capped at one or both ends by the proteasome regulatory ATPase, PAN.

It localises to the cytoplasm. It catalyses the reaction Cleavage of peptide bonds with very broad specificity.. With respect to regulation, the formation of the proteasomal ATPase PAN-20S proteasome complex, via the docking of the C-termini of PAN into the intersubunit pockets in the alpha-rings, triggers opening of the gate for substrate entry. Interconversion between the open-gate and close-gate conformations leads to a dynamic regulation of the 20S proteasome proteolysis activity. Component of the proteasome core, a large protease complex with broad specificity involved in protein degradation. The protein is Proteasome subunit beta 1 of Saccharolobus islandicus (strain M.16.27) (Sulfolobus islandicus).